Reading from the N-terminus, the 793-residue chain is Xaa-Pro dipeptidyl-peptidase (793 aa).

Catalysis depends on charge relay system residues serine 363, aspartate 483, and histidine 514.

This sequence belongs to the peptidase S15 family. In terms of assembly, homodimer.

It localises to the cytoplasm. It carries out the reaction Hydrolyzes Xaa-Pro-|- bonds to release unblocked, N-terminal dipeptides from substrates including Ala-Pro-|-p-nitroanilide and (sequentially) Tyr-Pro-|-Phe-Pro-|-Gly-Pro-|-Ile.. In terms of biological role, removes N-terminal dipeptides sequentially from polypeptides having unsubstituted N-termini provided that the penultimate residue is proline. In Lactobacillus helveticus (strain DPC 4571), this protein is Xaa-Pro dipeptidyl-peptidase.